The primary structure comprises 198 residues: Large ribosomal subunit protein eL19 (198 aa).

Disordered regions lie at residues 66–85 (YEEARRKGRHTGYGKRRGTA) and 150–177 (KRAKQLADQAQARRDKNKESRKRREERQ). The segment covering 71-83 (RKGRHTGYGKRRG) has biased composition (basic residues). The span at 160-177 (QARRDKNKESRKRREERQ) shows a compositional bias: basic and acidic residues.

This sequence belongs to the eukaryotic ribosomal protein eL19 family.

The protein is Large ribosomal subunit protein eL19 (rpl-19) of Caenorhabditis elegans.